The primary structure comprises 1198 residues: Peroxisomal ATPase PEX6 (1198 aa).

879–886 (GPPGTGKT) provides a ligand contact to ATP.

It belongs to the AAA ATPase family. In terms of assembly, interacts with PEX1; forming the PEX1-PEX6 AAA ATPase complex, which is composed of a heterohexamer formed by a trimer of PEX1-PEX6 dimers.

The protein localises to the cytoplasm. It is found in the cytosol. The protein resides in the peroxisome membrane. It catalyses the reaction ATP + H2O = ADP + phosphate + H(+). In terms of biological role, component of the PEX1-PEX6 AAA ATPase complex, a protein dislocase complex that mediates the ATP-dependent extraction of the PEX5 receptor from peroxisomal membranes, an essential step for PEX5 recycling. Specifically recognizes PEX5 monoubiquitinated at 'Cys-6', and pulls it out of the peroxisome lumen through the PEX2-PEX10-PEX12 retrotranslocation channel. Extraction by the PEX1-PEX6 AAA ATPase complex is accompanied by unfolding of the TPR repeats and release of bound cargo from PEX5. This Debaryomyces hansenii (strain ATCC 36239 / CBS 767 / BCRC 21394 / JCM 1990 / NBRC 0083 / IGC 2968) (Yeast) protein is Peroxisomal ATPase PEX6 (PEX6).